A 324-amino-acid polypeptide reads, in one-letter code: NAC domain-containing protein 30 (324 aa).

An NAC domain is found at 9–158; it reads MPPGFRFHPT…GWVVCRAFRK (150 aa). A DNA-binding region spans residues 109–164; it reads IGMRKTLVYYKGRAPNGRKSDWIMHEYRLQNSELAPVQEEGWVVCRAFRKPIPNQR. The segment covering 232–244 has biased composition (low complexity); sequence LPQLDSPSLSPSL. A disordered region spans residues 232–259; it reads LPQLDSPSLSPSLGTNKDQNESFEQEEE.

Belongs to the plant vascular related NAC-domain protein family. Forms homodimer and heterodimers with other VND proteins (e.g. NAC037/VND1, NAC076/VND2 and NAC105/VND3) via their N-termini. Interacts with NAC083/VNI2. As to expression, expressed in developing protoxylems in roots and shoots. Detected in root protoxylem poles and in vessels of protoxylems, outermost metaxylems, inner metaxylems, shoots and hypocotyls. Expressed in roots, hypocotyls, cotyledons and leaves. Accumulates in the xylem but not in interfascicular fibers or pith cells in inflorescence stems. Present in developing vessels of the secondary xylem in roots undergoing secondary growth.

The protein resides in the nucleus. Functionally, transcription activator that binds to the secondary wall NAC binding element (SNBE), 5'-(T/A)NN(C/T)(T/C/G)TNNNNNNNA(A/C)GN(A/C/T)(A/T)-3', in the promoter of target genes (e.g. genes involved in secondary wall biosynthesis, cell wall modification such as xylan accumulation, and programmed cell death). Involved in xylem formation in roots and shoots, especially regulating protoxylem vessel differentiation by promoting immature xylem vessel-specific genes expression. Can activate the expression of several genes including XCP1, MYB46, NAC010/SND3, MYB103, MYB58, MYB63, MYB83, KNAT7, ASL19 and ASL20. In terms of biological role, required for the soilborne fungal pathogen Verticillium longisporum-induced transdifferentiation of chloroplast-containing bundle sheath cells to functional xylem elements leading to stunted growth, vein clearing, and leaf chloroses, as well as xylem hyperplasia within the vasculature of leaves, hypocotyls, and roots due to reinitiation of cambial activity and transdifferentiation of xylem parenchyma cells. This developmental reprogramming also mediates an increased drought stress tolerance. The protein is NAC domain-containing protein 30 of Arabidopsis thaliana (Mouse-ear cress).